The chain runs to 194 residues: Glycerol-3-phosphate acyltransferase (194 aa).

Transmembrane regions (helical) follow at residues 3–23, 52–72, 80–100, 112–132, 135–155, and 162–182; these read AGLF…GLLL, VGIL…LLAW, MQAW…FLLF, VFLA…ILLV, WRYI…IIFF, and LLIA…SNIS.

The protein belongs to the PlsY family. Probably interacts with PlsX.

The protein localises to the cell inner membrane. The enzyme catalyses an acyl phosphate + sn-glycerol 3-phosphate = a 1-acyl-sn-glycero-3-phosphate + phosphate. It functions in the pathway lipid metabolism; phospholipid metabolism. Its function is as follows. Catalyzes the transfer of an acyl group from acyl-phosphate (acyl-PO(4)) to glycerol-3-phosphate (G3P) to form lysophosphatidic acid (LPA). This enzyme utilizes acyl-phosphate as fatty acyl donor, but not acyl-CoA or acyl-ACP. The protein is Glycerol-3-phosphate acyltransferase of Trichlorobacter lovleyi (strain ATCC BAA-1151 / DSM 17278 / SZ) (Geobacter lovleyi).